Reading from the N-terminus, the 134-residue chain is Retinol-binding protein 2 (134 aa).

All-trans-retinol contacts are provided by K41 and Q109.

This sequence belongs to the calycin superfamily. Fatty-acid binding protein (FABP) family. In terms of tissue distribution, higher expression in adult small intestine and to a much lesser extent in fetal kidney.

The protein resides in the cytoplasm. Its function is as follows. Intracellular transport of retinol. The sequence is that of Retinol-binding protein 2 (RBP2) from Homo sapiens (Human).